The primary structure comprises 220 residues: Claudin-6 (220 aa).

Over 1–7 (MASAGMQ) the chain is Cytoplasmic. The helical transmembrane segment at 8-28 (ILGVVLTLLGWVNGLVSCALP) threads the bilayer. Residues 29 to 81 (MWKVTAFIGNSIVVAQVVWEGLWMSCVVQSTGQMQCKVYDSLLALPQDLQAAR) lie on the Extracellular side of the membrane. Residues 82-102 (ALCVIALLVALFGLLVYLAGA) form a helical membrane-spanning segment. The Cytoplasmic portion of the chain corresponds to 103–116 (KCTTCVEEKDSKAR). A helical transmembrane segment spans residues 117–137 (LVLTSGIVFVISGVLTLIPVC). At 138-160 (WTAHAIIRDFYNPLVAEAQKREL) the chain is on the extracellular side. The chain crosses the membrane as a helical span at residues 161–181 (GASLYLGWAASGLLLLGGGLL). The Cytoplasmic portion of the chain corresponds to 182 to 220 (CCTCPSGGSQGPSHYMARYSTSAPAISRGPSEYPTKNYV). 4 positions are modified to phosphoserine: Ser-201, Ser-203, Ser-208, and Ser-212. An interactions with TJP1, TJP2 and TJP3 region spans residues 219 to 220 (YV).

It belongs to the claudin family. As to quaternary structure, directly interacts with TJP1/ZO-1, TJP2/ZO-2 and TJP3/ZO-3. Interacts with CLDN1, CD81 and OCLN. As to expression, expressed in the liver, in peripheral blood mononuclear cells and hepatocarcinoma cell lines.

It is found in the cell junction. The protein localises to the tight junction. The protein resides in the cell membrane. Plays a major role in tight junction-specific obliteration of the intercellular space. In terms of biological role, (Microbial infection) Acts as a receptor for hepatitis C virus (HCV) entry into hepatic cells. The protein is Claudin-6 (CLDN6) of Homo sapiens (Human).